The following is an 845-amino-acid chain: Beta-mannosidase B (845 aa).

The tract at residues 1–20 is disordered; it reads MSKLQQFPLSKGWSFRDSED. Asn-252 carries N-linked (GlcNAc...) asparagine glycosylation. Catalysis depends on Glu-432, which acts as the Proton donor. Asn-717 and Asn-723 each carry an N-linked (GlcNAc...) asparagine glycan.

Belongs to the glycosyl hydrolase 2 family. Beta-mannosidase B subfamily.

It catalyses the reaction Hydrolysis of terminal, non-reducing beta-D-mannose residues in beta-D-mannosides.. Its pathway is glycan metabolism; N-glycan degradation. Functionally, exoglycosidase that cleaves the single beta-linked mannose residue from the non-reducing end of beta-mannosidic oligosaccharides of various complexity and length. Prefers mannobiose over mannotriose and has no activity against polymeric mannan. Is also severely restricted by galactosyl substitutions at the +1 subsite. The polypeptide is Beta-mannosidase B (mndB) (Neosartorya fischeri (strain ATCC 1020 / DSM 3700 / CBS 544.65 / FGSC A1164 / JCM 1740 / NRRL 181 / WB 181) (Aspergillus fischerianus)).